We begin with the raw amino-acid sequence, 593 residues long: Proline--tRNA ligase (593 aa).

This sequence belongs to the class-II aminoacyl-tRNA synthetase family. ProS type 1 subfamily. In terms of assembly, homodimer.

It is found in the cytoplasm. It carries out the reaction tRNA(Pro) + L-proline + ATP = L-prolyl-tRNA(Pro) + AMP + diphosphate. Its function is as follows. Catalyzes the attachment of proline to tRNA(Pro) in a two-step reaction: proline is first activated by ATP to form Pro-AMP and then transferred to the acceptor end of tRNA(Pro). As ProRS can inadvertently accommodate and process non-cognate amino acids such as alanine and cysteine, to avoid such errors it has two additional distinct editing activities against alanine. One activity is designated as 'pretransfer' editing and involves the tRNA(Pro)-independent hydrolysis of activated Ala-AMP. The other activity is designated 'posttransfer' editing and involves deacylation of mischarged Ala-tRNA(Pro). The misacylated Cys-tRNA(Pro) is not edited by ProRS. This chain is Proline--tRNA ligase, found in Synechococcus sp. (strain CC9605).